The following is a 378-amino-acid chain: IDS-type sesquiterpene synthase (378 aa).

The Mg(2+) site is built by Asp-120 and Asp-124. The DDXXD motif motif lies at 120 to 124 (DDYVD).

Belongs to the terpene synthase family. Mg(2+) serves as cofactor. Highly expressed in male epidermal tissue associated with the cuticle of ventral sternites.

It catalyses the reaction (2Z,6E)-farnesyl diphosphate = (Z)-alpha-bisabolene + diphosphate. Its pathway is pheromone biosynthesis. Its function is as follows. Sesquiterpene alcohol synthase that catalyzes the formation of the pheromone precursor (Z)-alpha-bisabolene from (2Z,6E)-farnesyl diphosphate. The chain is IDS-type sesquiterpene synthase from Nezara viridula (Southern green stink bug).